The following is a 428-amino-acid chain: GTPase Obg (428 aa).

Residues 1–158 enclose the Obg domain; sequence MFVDKVKVYA…RNLLLELKVL (158 aa). The OBG-type G domain occupies 159–329; sequence ADVGLVGFPS…LMLAIADELE (171 aa). GTP-binding positions include 165 to 172, 190 to 194, 212 to 215, 282 to 285, and 310 to 312; these read GFPSVGKS, FTTIT, DLPG, NKMD, and SAI. S172 and T192 together coordinate Mg(2+). Residues 350–428 form the OCT domain; sequence KHELPIEPFT…IMKFEFEFVE (79 aa).

Belongs to the TRAFAC class OBG-HflX-like GTPase superfamily. OBG GTPase family. In terms of assembly, monomer. Mg(2+) is required as a cofactor.

It localises to the cytoplasm. In terms of biological role, an essential GTPase which binds GTP, GDP and possibly (p)ppGpp with moderate affinity, with high nucleotide exchange rates and a fairly low GTP hydrolysis rate. Plays a role in control of the cell cycle, stress response, ribosome biogenesis and in those bacteria that undergo differentiation, in morphogenesis control. In Shouchella clausii (strain KSM-K16) (Alkalihalobacillus clausii), this protein is GTPase Obg.